Here is a 142-residue protein sequence, read N- to C-terminus: Baculoviral IAP repeat-containing protein 5 (142 aa).

Residues 18 to 88 (RISTFKNWPF…KHSSGCAFLS (71 aa)) form a BIR repeat. Position 20 is a phosphoserine; by AURKC (Ser-20). Lys-23 is modified (N6-acetyllysine). A Phosphothreonine; by CDK1 and CDK15 modification is found at Thr-34. The residue at position 48 (Thr-48) is a Phosphothreonine. Cys-57, Cys-60, His-77, and Cys-84 together coordinate Zn(2+). An N6-acetyllysine mark is found at Lys-90, Lys-110, Lys-112, and Lys-115. The residue at position 117 (Thr-117) is a Phosphothreonine; by AURKB. Lys-129 is subject to N6-acetyllysine.

It belongs to the IAP family. As to quaternary structure, monomer or homodimer. Exists as a homodimer in the apo state and as a monomer in the CPC-bound state. The monomer protects cells against apoptosis more efficiently than the dimer. Only the dimeric form is capable of enhancing tubulin stability in cells. When phosphorylated, interacts with LAMTOR5/HBXIP; the resulting complex binds pro-CASP9, as well as active CASP9, but much less efficiently. Component of the chromosomal passenger complex (CPC) composed of at least BIRC5/survivin, CDCA8/borealin, INCENP, AURKB or AURKC; in the complex forms a triple-helix bundle-based subcomplex with INCENP and CDCA8. Interacts with JTB. Interacts (via BIR domain) with histone H3 phosphorylated at 'Thr-3' (H3pT3). Interacts with EVI5. Interacts with GTP-bound RAN in both the S and M phases of the cell cycle. Interacts with USP9X. Interacts with tubulin. Interacts with BIRC2/c-IAP1. The acetylated form at Lys-129 interacts with STAT3. The monomeric form deacetylated at Lys-129 interacts with XPO1/CRM1. The monomeric form interacts with XIAP/BIRC4. Both the dimeric and monomeric form can interact with DIABLO/SMAC. Interacts with BIRC6/bruce. Interacts with FBXL7; this interaction facilitates the polyubiquitination and subsequent proteasomal degradation of BIRC5 by the SCF(FBXL7) E3 ubiquitin-protein ligase complex. In terms of processing, ubiquitinated by the Cul9-RING ubiquitin-protein ligase complex, leading to its degradation. Ubiquitination is required for centrosomal targeting. Deubiquitinated by USP35 or USP38; leading to stabilization. Acetylation at Lys-129 results in its homodimerization, while deacetylation promotes the formation of monomers which heterodimerize with XPO1/CRM1 which facilitates its nuclear export. The acetylated form represses STAT3 transactivation. The dynamic equilibrium between its acetylation and deacetylation at Lys-129 determines its interaction with XPO1/CRM1, its subsequent subcellular localization, and its ability to inhibit STAT3 transactivation. Post-translationally, in vitro phosphorylation at Thr-117 by AURKB prevents interaction with INCENP and localization to mitotic chromosomes. Phosphorylation at Thr-48 by CK2 is critical for its mitotic and anti-apoptotic activities. Phosphorylation at Thr-34 by CDK15 is critical for its anti-apoptotic activity. Phosphorylation at Ser-20 by AURKC is critical for regulation of proper chromosome alignment and segregation, and possibly cytokinesis.

The protein localises to the cytoplasm. Its subcellular location is the nucleus. The protein resides in the chromosome. It localises to the centromere. It is found in the cytoskeleton. The protein localises to the spindle. Its subcellular location is the kinetochore. The protein resides in the midbody. Multitasking protein that has dual roles in promoting cell proliferation and preventing apoptosis. Component of a chromosome passage protein complex (CPC) which is essential for chromosome alignment and segregation during mitosis and cytokinesis. Acts as an important regulator of the localization of this complex; directs CPC movement to different locations from the inner centromere during prometaphase to midbody during cytokinesis and participates in the organization of the center spindle by associating with polymerized microtubules. Involved in the recruitment of CPC to centromeres during early mitosis via association with histone H3 phosphorylated at 'Thr-3' (H3pT3) during mitosis. The complex with RAN plays a role in mitotic spindle formation by serving as a physical scaffold to help deliver the RAN effector molecule TPX2 to microtubules. May counteract a default induction of apoptosis in G2/M phase. The acetylated form represses STAT3 transactivation of target gene promoters. May play a role in neoplasia. Inhibitor of CASP3 and CASP7. Essential for the maintenance of mitochondrial integrity and function. This Felis catus (Cat) protein is Baculoviral IAP repeat-containing protein 5 (BIRC5).